Here is a 139-residue protein sequence, read N- to C-terminus: Ribulose bisphosphate carboxylase small subunit, chromosomal (139 aa).

The protein belongs to the RuBisCO small chain family. In terms of assembly, heterohexadecamer of 8 large and 8 small subunits.

RuBisCO catalyzes two reactions: the carboxylation of D-ribulose 1,5-bisphosphate, the primary event in carbon dioxide fixation, as well as the oxidative fragmentation of the pentose substrate. Both reactions occur simultaneously and in competition at the same active site. Although the small subunit is not catalytic it is essential for maximal activity. This Cupriavidus necator (Alcaligenes eutrophus) protein is Ribulose bisphosphate carboxylase small subunit, chromosomal.